The sequence spans 113 residues: Large ribosomal subunit protein bL17 (113 aa).

The protein belongs to the bacterial ribosomal protein bL17 family. In terms of assembly, part of the 50S ribosomal subunit. Contacts protein L32.

This chain is Large ribosomal subunit protein bL17, found in Clostridium beijerinckii (strain ATCC 51743 / NCIMB 8052) (Clostridium acetobutylicum).